Reading from the N-terminus, the 91-residue chain is YcgL domain-containing protein ETA_15380 (91 aa).

A YcgL domain is found at 1-85; that stretch reads MFCVIYRSPQ…PLESLLKIHL (85 aa).

This Erwinia tasmaniensis (strain DSM 17950 / CFBP 7177 / CIP 109463 / NCPPB 4357 / Et1/99) protein is YcgL domain-containing protein ETA_15380.